We begin with the raw amino-acid sequence, 259 residues long: Taurine import ATP-binding protein TauB (259 aa).

The region spanning 4-233 (LELERISAQY…RYAAGESARA (230 aa)) is the ABC transporter domain. ATP is bound at residue 38 to 45 (GPSGSGKT).

The protein belongs to the ABC transporter superfamily. Taurine importer (TC 3.A.1.17.1) family. As to quaternary structure, the complex is composed of two ATP-binding proteins (TauB), two transmembrane proteins (TauC) and a solute-binding protein (TauA).

It is found in the cell inner membrane. It carries out the reaction taurine(out) + ATP + H2O = taurine(in) + ADP + phosphate + H(+). Functionally, part of the ABC transporter complex TauABC involved in taurine import. Responsible for energy coupling to the transport system. The sequence is that of Taurine import ATP-binding protein TauB from Pseudomonas entomophila (strain L48).